Here is a 1085-residue protein sequence, read N- to C-terminus: Phosphorylase b kinase regulatory subunit beta (1085 aa).

3 positions are modified to phosphoserine: S10, S19, and S693. Calmodulin-binding stretches follow at residues 760 to 787 (RVYR…VVDS) and 912 to 943 (SGRC…ILER). C1082 carries the S-farnesyl cysteine lipid modification.

This sequence belongs to the phosphorylase b kinase regulatory chain family. Hexadecamer of 4 heterotetramers, each composed of alpha, beta, gamma, and delta subunits. Alpha (PHKA1 or PHKA2) and beta (PHKB) are regulatory subunits, gamma (PHKG1 or PHKG2) is the catalytic subunit, and delta is calmodulin. In terms of processing, although the final Cys may be farnesylated, the terminal tripeptide is probably not removed, and the C-terminus is not methylated.

It is found in the cell membrane. The protein operates within glycan biosynthesis; glycogen metabolism. By phosphorylation of various serine residues. Functionally, phosphorylase b kinase catalyzes the phosphorylation of serine in certain substrates, including troponin I. The beta chain acts as a regulatory unit and modulates the activity of the holoenzyme in response to phosphorylation. The sequence is that of Phosphorylase b kinase regulatory subunit beta (Phkb) from Mus musculus (Mouse).